The primary structure comprises 494 residues: MFFQNIMIYLFSLLLIPLIVYFLLIYIRLRYSNNSNNQIKTIGLTTLIINLILSMIIFILFDFSSKQFQLQLEEIYKISYFDLYLGIDGISIYFLLLTTMIMPISLVANWNSIDSKNVLSFVIIILLLETLLLAVFLVLDILLFYIFFESILPPLFLLIGLFGSSDKVRASFYLFLYTLLGSLFMLLSIITMSSIMGATAFDALSKANFSYITQLFLFYGIFISFAVKTPTIFLNTWLLKAHVESPLAGSVILAGIVWKLRWYGIFRLIIPLLPKASMDYTYIVYVIGVITIFYTSFSTLRTIAIKELIAYSSVSHAAVYLLSAFSNTIQGIEGAIALGLAHGFVSSGLFICVGGILYDRSSTRLITYYRGMAQLMPIFCILFLYITLGNCGSPLTLNFIGEFMSLYGIFERISVLGVLASTSIVFSAAYTIFMFNRIAFGGQFSSYFFNYVKDLSKREFILLISLVVPAVFFGIYPAVILDGLHYSVSGLIYN.

Helical transmembrane passes span 6–26 (IMIY…LLIY), 41–61 (TIGL…FILF), 87–107 (IDGI…ISLV), 118–138 (VLSF…VFLV), 141–161 (ILLF…LIGL), 172–192 (FYLF…IITM), 207–227 (ANFS…SFAV), 246–266 (PLAG…YGIF), 280–300 (YTYI…FSTL), 302–322 (TIAI…VYLL), 336–356 (IALG…VGGI), 375–395 (LMPI…GSPL), 415–435 (VLGV…IFMF), and 460–480 (FILL…PAVI).

Belongs to the complex I subunit 4 family.

It localises to the mitochondrion membrane. The enzyme catalyses a ubiquinone + NADH + 5 H(+)(in) = a ubiquinol + NAD(+) + 4 H(+)(out). Its function is as follows. Core subunit of the mitochondrial membrane respiratory chain NADH dehydrogenase (Complex I) that is believed to belong to the minimal assembly required for catalysis. Complex I functions in the transfer of electrons from NADH to the respiratory chain. The immediate electron acceptor for the enzyme is believed to be ubiquinone. The protein is NADH-ubiquinone oxidoreductase chain 4 (ND4) of Trichophyton rubrum (Athlete's foot fungus).